The primary structure comprises 166 residues: NADPH-dependent 7-cyano-7-deazaguanine reductase (166 aa).

The Thioimide intermediate role is filled by C57. The Proton donor role is filled by D64. Residues 79-81 (VES) and 98-99 (HE) contribute to the substrate site.

The protein belongs to the GTP cyclohydrolase I family. QueF type 1 subfamily.

It is found in the cytoplasm. The catalysed reaction is 7-aminomethyl-7-carbaguanine + 2 NADP(+) = 7-cyano-7-deazaguanine + 2 NADPH + 3 H(+). Its pathway is tRNA modification; tRNA-queuosine biosynthesis. Functionally, catalyzes the NADPH-dependent reduction of 7-cyano-7-deazaguanine (preQ0) to 7-aminomethyl-7-deazaguanine (preQ1). In Staphylococcus aureus (strain MRSA252), this protein is NADPH-dependent 7-cyano-7-deazaguanine reductase.